We begin with the raw amino-acid sequence, 467 residues long: MSFPQLGYPQYLTAGQAAVYGGERPGVLAAAAAAAAAAAAAGSGRPTGAELGSSSTAAVTSVLGMYASPYSAPNYSAFLPYTTDLTLFSQMGSQYELKDNPGVHPATFAAHTTPGYYPYGQFQYGDPGRPKNATRESTGTLKAWLNEHRKNPYPTKGEKIMLAIITKMTLTQVSTWFANARRRLKKENKVTWGARSKEDDNIFGSDNEGDHEKNEDDEEIDLESIDIDKIDDNDGEQSNEEEDEKLEHLRQGEKESLKKESEVMIPSSDGLKPKDSMSLGKESSDTSNTRIVSPGGQGNIQVPPHSKPKIWSLAETATSPDGALKSSPPPSQGNHTSPPIQHPAFLPSHGLYTCQIGKFHNWTNGAFLTQSSLINMRSLLGVNPHHAAHHNHHHLQAHQQAPFLATNLSSLSSDKTPERTSPKHSDRENVPRTDSPPQLKPSFQAVRENTLSQQEGTSRILTALPSA.

A DNA-binding region (homeobox; TALE-type) is located at residues 126–188 (DPGRPKNATR…NARRRLKKEN (63 aa)). Disordered stretches follow at residues 197-306 (KEDD…PPHS), 318-344 (TSPD…QHPA), and 410-467 (SLSS…LPSA). 2 stretches are compositionally biased toward acidic residues: residues 215 to 225 (EDDEEIDLESI) and 233 to 244 (NDGEQSNEEEDE). The span at 245–262 (KLEHLRQGEKESLKKESE) shows a compositional bias: basic and acidic residues. Residues 415–431 (KTPERTSPKHSDRENVP) are compositionally biased toward basic and acidic residues. Polar residues predominate over residues 447–460 (RENTLSQQEGTSRI).

This sequence belongs to the TALE/IRO homeobox family. Expressed early in neural differentiation in the neural plate, and expression continues in the neural tube after neural fold closure. Expressed in the presumptive midbrain territory. Also expressed in the prospective neural crest and the preplacodal field, anterior to the neural plate. Strongly expressed in the profundal placode and weakly expressed in the trigeminal placode. Also expressed in the mesoderm in the Spemann organizer from the start of gastrulation, and subsequently in its derivatives; namely in the notochord as well as in the somites of stage 25 embryos, and the somites and notochord of tailbud embryos. Also expressed in specific and overlapping dynamic patterns with irx2 and irx3 during pronephric kidney development. Renal expression begins in the dorsal region of the pronephric anlage at mid neurula stage and continues to at least tailbud stages where expression is confined to the intermediate tubule segment IT1. Renal expression is maintained at tadpole stages.

The protein localises to the nucleus. Acts partially redundantly with other irx members in neural patterning. Required for formation of the posterior forebrain, midbrain, hindbrain, and to a lesser extent, spinal cord. Acts early in neural plate development to induce expression of some but not all proneural genes, and specify a neural precursor state. Also up-regulates repressors that prevent neuronal differentiation. Patterns the neuroectoderm in both the anterior/posterior and dorsal/ventral axes. Acts primarily as a transcriptional repressor during neural development, and binds to the bmp4 promoter to repress gene expression and thus mediate down-regulation of bmp4 by wnt signaling. Controls multiple processes through bmp4-repression including neural plate development, neural crest specification and Spemann organizer development. Involved in the specification of the preplacodal field at the anterior border of the neural plate. Regulates the genetic cascade of interactions that are necessary for positioning the isthmus organizer and the formation of the midbrain-hindbrain boundary. Required during at least two stages of pronephros kidney development; during neurula stages, maintains transcription of key renal genes to define the size and identity of the pronephric anlage, probably in part through regulation of bmp-signaling. Subsequently required for proper formation of the intermediate tubule segment of the pronephros. Acts principally as a transcriptional activator during pronephros development. The sequence is that of Iroquois-class homeodomain protein irx-1-A (irx1-a) from Xenopus laevis (African clawed frog).